Consider the following 381-residue polypeptide: Queuine tRNA-ribosyltransferase (381 aa).

The Proton acceptor role is filled by aspartate 96. Substrate contacts are provided by residues 96-100 (DSGGF), aspartate 150, glutamine 193, and glycine 220. The RNA binding stretch occupies residues 251–257 (GVGSPDS). Aspartate 270 functions as the Nucleophile in the catalytic mechanism. Residues 275–279 (TRIAR) are RNA binding; important for wobble base 34 recognition. Residues cysteine 308, cysteine 310, cysteine 313, and histidine 339 each coordinate Zn(2+).

This sequence belongs to the queuine tRNA-ribosyltransferase family. As to quaternary structure, homodimer. Within each dimer, one monomer is responsible for RNA recognition and catalysis, while the other monomer binds to the replacement base PreQ1. Requires Zn(2+) as cofactor.

The enzyme catalyses 7-aminomethyl-7-carbaguanine + guanosine(34) in tRNA = 7-aminomethyl-7-carbaguanosine(34) in tRNA + guanine. It participates in tRNA modification; tRNA-queuosine biosynthesis. In terms of biological role, catalyzes the base-exchange of a guanine (G) residue with the queuine precursor 7-aminomethyl-7-deazaguanine (PreQ1) at position 34 (anticodon wobble position) in tRNAs with GU(N) anticodons (tRNA-Asp, -Asn, -His and -Tyr). Catalysis occurs through a double-displacement mechanism. The nucleophile active site attacks the C1' of nucleotide 34 to detach the guanine base from the RNA, forming a covalent enzyme-RNA intermediate. The proton acceptor active site deprotonates the incoming PreQ1, allowing a nucleophilic attack on the C1' of the ribose to form the product. After dissociation, two additional enzymatic reactions on the tRNA convert PreQ1 to queuine (Q), resulting in the hypermodified nucleoside queuosine (7-(((4,5-cis-dihydroxy-2-cyclopenten-1-yl)amino)methyl)-7-deazaguanosine). This is Queuine tRNA-ribosyltransferase from Bacillus pumilus (strain SAFR-032).